Consider the following 173-residue polypeptide: HAM34 protein (173 aa).

The span at 22–89 shows a compositional bias: low complexity; that stretch reads AAPATTPDTA…ADGTQTATAP (68 aa). The interval 22 to 155 is disordered; that stretch reads AAPATTPDTA…ATDTTSGASH (134 aa). The segment covering 95–133 has biased composition (polar residues); sequence TEESSASGEMTPTVGTDTSDQVSDSTAAGPSTPEGSMTG. The span at 134 to 155 shows a compositional bias: low complexity; sequence TSTPKASDSSSSATDTTSGASH.

As to expression, germinating spores.

Could be a structural protein required for the infection process of B.lactucae. In Bremia lactucae (Lettuce downy mildew), this protein is HAM34 protein (HAM34).